A 332-amino-acid polypeptide reads, in one-letter code: Trace amine-associated receptor 1 (332 aa).

The Extracellular segment spans residues 1 to 23 (MHLCHAITNISHRNSDWSREVQA). Asn-9 carries N-linked (GlcNAc...) asparagine glycosylation. The chain crosses the membrane as a helical span at residues 24–48 (SLYSLMSLIILATLVGNLIVIISIS). Over 49-58 (HFKQLHTPTN) the chain is Cytoplasmic. A helical membrane pass occupies residues 59-80 (WLLHSMAIVDFLLGCLIMPCSM). The Extracellular portion of the chain corresponds to 81–95 (VRTVERCWYFGEILC). Residues Cys-95 and Cys-181 are joined by a disulfide bond. A helical membrane pass occupies residues 96–118 (KVHTSTDIMLSSASIFHLAFISI). Asp-102 contacts 2-phenylethylamine. Residues 119-138 (DRYCAVCDPLRYKAKINIST) are Cytoplasmic-facing. The chain crosses the membrane as a helical span at residues 139–160 (ILVMILVSWSLPAVYAFGMIFL). Residues 161–187 (ELNLKGVEELYRSQVSDLGGCSPFFSK) lie on the Extracellular side of the membrane. Residues 174–185 (QVSDLGGCSPFF) form an extracellular Loop 2 (ECL2) region. Residues 188–210 (VSGVLAFMTSFYIPGSVMLFVYY) traverse the membrane as a helical segment. Topologically, residues 211 to 246 (RIYFIAKGQARSINRTNVQVGLEGKSQAPQSKETKA) are cytoplasmic. A helical transmembrane segment spans residues 247–270 (AKTLGIMVGVFLVCWCPFFLCTVL). The Extracellular segment spans residues 271-283 (DPFLGYVIPPSLN). The chain crosses the membrane as a helical span at residues 284–304 (DALYWFGYLNSALNPMVYAFF). Residues 305–332 (YPWFRRALKMVLLGKIFQKDSSRSKLFL) lie on the Cytoplasmic side of the membrane.

Belongs to the G-protein coupled receptor 1 family. As to expression, widely distributed throughout the brain. Strongly expressed in the mitral cell layer of the olfactory bulb, piriform cortex, the arcuate, motor, and mesencephalic trigeminal nuclei, lateral reticular and hypoglossal nuclei, cerebellar Purkinje cells, and ventral horn of the spinal cord. Moderately expressed in the frontal, entorhinal, and agranular cortices, the ventral pallidum, thalamus, hippocampus, several hypothalamic nuclei, ambiguus, dorsal raphe, and gigantocellular reticular nuclei. Weakly expressed in the septum, basal ganglia, amygdala, myelencephalon, and spinal cord dorsal horn. Particularly interesting is the moderate expression in several monoaminergic cell groups, namely the dorsal raphe, the locus coeruleus, and the ventral tegmental area.

It is found in the endomembrane system. It localises to the endoplasmic reticulum membrane. The protein resides in the cell membrane. Its activity is regulated as follows. Activated by SEP-363856 small molecule: IHCH-7179 acts both as an agonist activator for HTR1A and TAAR1. Functionally, intracellular G-protein coupled receptor for trace amines, which recognizes endogenous amine-containing metabolites such as beta-phenylethylamine (beta-PEA), 3-iodothyronamine (T1AM), isoamylamine (IAA), cadaverine (CAD), cyclohexylamine (CHA), p-tyramine (p-TYR), trimethylamine (TMA), octopamine and tryptamine. Also functions as a receptor for various drugs and psychoactive substances, such as amphetamine and methamphetamine. Unresponsive to classical biogenic amines, such as epinephrine and histamine and only partially activated by dopamine and serotonin. Expressed in both the central and peripheral nervous system: TAAR1 activation regulates the activity of several neurotransmitter signaling pathways by (1) decreasing the basal firing rates of the neurons involved and by (2) lowering the sensitivity of receptors to neurotransmitters. Ligand binding causes a conformation change that triggers signaling via guanine nucleotide-binding proteins (G proteins) and modulates the activity of downstream effectors. TAAR1 is coupled with different G(i)/G(o)-, G(s)- or G(q)/G(11) classes of G alpha proteins depending on the ligand. CAD-binding is coupled to G(i)/G(o) G alpha proteins and mediates inhibition of adenylate cyclase activity. T1AM- or beta-PEA-binding is coupled to G(s) G alpha proteins and mediates activation of adenylate cyclase activity. CHA- or IAA-binding is coupled to G(q)/G(11) G alpha proteins and activates phospholipase C-beta, releasing diacylglycerol (DAG) and inositol 1,4,5-trisphosphate (IP3) second messengers. TMA-binding is coupled with all three G(i)/G(o)-, G(s)- or G(q)/G(11) G alpha protein subtypes. The chain is Trace amine-associated receptor 1 from Mus musculus (Mouse).